The following is a 144-amino-acid chain: 3-hydroxyacyl-[acyl-carrier-protein] dehydratase FabZ (144 aa).

The active site involves H48.

Belongs to the thioester dehydratase family. FabZ subfamily.

It is found in the cytoplasm. It catalyses the reaction a (3R)-hydroxyacyl-[ACP] = a (2E)-enoyl-[ACP] + H2O. Functionally, involved in unsaturated fatty acids biosynthesis. Catalyzes the dehydration of short chain beta-hydroxyacyl-ACPs and long chain saturated and unsaturated beta-hydroxyacyl-ACPs. This chain is 3-hydroxyacyl-[acyl-carrier-protein] dehydratase FabZ, found in Listeria innocua serovar 6a (strain ATCC BAA-680 / CLIP 11262).